The following is a 103-amino-acid chain: uncharacterized protein (103 aa).

This is an uncharacterized protein from Enterobacteria phage T4 (Bacteriophage T4).